We begin with the raw amino-acid sequence, 227 residues long: Cytochrome c oxidase subunit 2 (227 aa).

The Mitochondrial intermembrane segment spans residues 1 to 14; sequence MAYPFQLGLQDATS. The chain crosses the membrane as a helical span at residues 15–45; the sequence is PIMEELLHFHDHTLMIVFLISSLVLYIISSM. Residues 46 to 59 are Mitochondrial matrix-facing; sequence LTTKLTHTSTMDAQ. Residues 60 to 87 traverse the membrane as a helical segment; sequence EVETVWTILPAIILVLIALPSLRILYMM. Residues 88-227 lie on the Mitochondrial intermembrane side of the membrane; that stretch reads DETNNPSLTV…YFETWSALMV (140 aa). His-161, Cys-196, Glu-198, Cys-200, His-204, and Met-207 together coordinate Cu cation. Glu-198 contributes to the Mg(2+) binding site. At Tyr-218 the chain carries Phosphotyrosine.

This sequence belongs to the cytochrome c oxidase subunit 2 family. Component of the cytochrome c oxidase (complex IV, CIV), a multisubunit enzyme composed of 14 subunits. The complex is composed of a catalytic core of 3 subunits MT-CO1, MT-CO2 and MT-CO3, encoded in the mitochondrial DNA, and 11 supernumerary subunits COX4I, COX5A, COX5B, COX6A, COX6B, COX6C, COX7A, COX7B, COX7C, COX8 and NDUFA4, which are encoded in the nuclear genome. The complex exists as a monomer or a dimer and forms supercomplexes (SCs) in the inner mitochondrial membrane with NADH-ubiquinone oxidoreductase (complex I, CI) and ubiquinol-cytochrome c oxidoreductase (cytochrome b-c1 complex, complex III, CIII), resulting in different assemblies (supercomplex SCI(1)III(2)IV(1) and megacomplex MCI(2)III(2)IV(2)). Found in a complex with TMEM177, COA6, COX18, COX20, SCO1 and SCO2. Interacts with TMEM177 in a COX20-dependent manner. Interacts with COX20. Interacts with COX16. The cofactor is Cu cation.

The protein resides in the mitochondrion inner membrane. It carries out the reaction 4 Fe(II)-[cytochrome c] + O2 + 8 H(+)(in) = 4 Fe(III)-[cytochrome c] + 2 H2O + 4 H(+)(out). Component of the cytochrome c oxidase, the last enzyme in the mitochondrial electron transport chain which drives oxidative phosphorylation. The respiratory chain contains 3 multisubunit complexes succinate dehydrogenase (complex II, CII), ubiquinol-cytochrome c oxidoreductase (cytochrome b-c1 complex, complex III, CIII) and cytochrome c oxidase (complex IV, CIV), that cooperate to transfer electrons derived from NADH and succinate to molecular oxygen, creating an electrochemical gradient over the inner membrane that drives transmembrane transport and the ATP synthase. Cytochrome c oxidase is the component of the respiratory chain that catalyzes the reduction of oxygen to water. Electrons originating from reduced cytochrome c in the intermembrane space (IMS) are transferred via the dinuclear copper A center (CU(A)) of subunit 2 and heme A of subunit 1 to the active site in subunit 1, a binuclear center (BNC) formed by heme A3 and copper B (CU(B)). The BNC reduces molecular oxygen to 2 water molecules using 4 electrons from cytochrome c in the IMS and 4 protons from the mitochondrial matrix. This Chrysocyon brachyurus (Maned wolf) protein is Cytochrome c oxidase subunit 2 (MT-CO2).